We begin with the raw amino-acid sequence, 428 residues long: MIDPNLLRNNLEEVAEKLKVKRNFVLDVALLSELEEQRKSLQVKTESLQAERNARSKNIGQAKARGEDISALLNEVEHMGIELSTTKAHLDEVLAEINQIVLAIPNLPADEVPLGKDESENLEVFRWGTPKTFDFDVKDHVSLGEGLKGLDFAAGVKLSGSRFVVMKGQIAKLHRALSQFMLDLHTEQHGYTETYVPYLVNHATLYGTGQLPKFGEDLFHTNALEGEQPYALIPTAEVPVTNLVRDEILDEADLPLKMTAHTPCFRSEAGSYGRDTRGLIRMHQFDKVELVQIVAPETSMQVLEELTGQAEKVLQLLELPYRKVLLCTGDMGFGSCKTYDLEVWLPAQNTYREISSCSNMWDFQARRMQARCRSKTDKKTRLVHTLNGSGLAVGRTLVAILENYQNADGTITVPSVLRPYMGGLAQIG.

Position 235 to 237 (235 to 237 (TAE)) interacts with L-serine. Position 266–268 (266–268 (RSE)) interacts with ATP. Glu-289 serves as a coordination point for L-serine. 353–356 (EISS) is a binding site for ATP. Ser-389 serves as a coordination point for L-serine.

The protein belongs to the class-II aminoacyl-tRNA synthetase family. Type-1 seryl-tRNA synthetase subfamily. Homodimer. The tRNA molecule binds across the dimer.

Its subcellular location is the cytoplasm. It catalyses the reaction tRNA(Ser) + L-serine + ATP = L-seryl-tRNA(Ser) + AMP + diphosphate + H(+). The catalysed reaction is tRNA(Sec) + L-serine + ATP = L-seryl-tRNA(Sec) + AMP + diphosphate + H(+). Its pathway is aminoacyl-tRNA biosynthesis; selenocysteinyl-tRNA(Sec) biosynthesis; L-seryl-tRNA(Sec) from L-serine and tRNA(Sec): step 1/1. In terms of biological role, catalyzes the attachment of serine to tRNA(Ser). Is also able to aminoacylate tRNA(Sec) with serine, to form the misacylated tRNA L-seryl-tRNA(Sec), which will be further converted into selenocysteinyl-tRNA(Sec). The protein is Serine--tRNA ligase of Pasteurella multocida (strain Pm70).